The sequence spans 136 residues: Putative pre-16S rRNA nuclease (136 aa).

Belongs to the YqgF nuclease family.

It localises to the cytoplasm. Functionally, could be a nuclease involved in processing of the 5'-end of pre-16S rRNA. This is Putative pre-16S rRNA nuclease from Francisella tularensis subsp. tularensis (strain WY96-3418).